Reading from the N-terminus, the 160-residue chain is Nucleotide-binding protein Tola_0795 (160 aa).

This sequence belongs to the YajQ family.

Its function is as follows. Nucleotide-binding protein. The polypeptide is Nucleotide-binding protein Tola_0795 (Tolumonas auensis (strain DSM 9187 / NBRC 110442 / TA 4)).